We begin with the raw amino-acid sequence, 106 residues long: Putative cytochrome c oxidase subunit 7A3, mitochondrial (106 aa).

Residues 1 to 23 constitute a mitochondrion transit peptide; sequence MLWNLLALHQIGQRTISTASHRH.

Belongs to the cytochrome c oxidase VIIa family.

The protein resides in the mitochondrion inner membrane. The sequence is that of Putative cytochrome c oxidase subunit 7A3, mitochondrial (COX7A2P2) from Homo sapiens (Human).